Consider the following 435-residue polypeptide: AP-2 complex subunit mu (435 aa).

An MHD domain is found at 170-434 (RNELFLDVLE…IGRSGIYETR (265 aa)). A 1,2-diacyl-sn-glycero-3-phospho-(1D-myo-inositol-3,4,5-trisphosphate) contacts are provided by K341, K345, and K354.

Belongs to the adaptor complexes medium subunit family. As to quaternary structure, adaptor protein complex 2 (AP-2) is a heterotetramer composed of two large adaptins (alpha-type subunit and beta-type subunit), a medium adaptin (mu-type subunit) and a small adaptin (sigma-type subunit).

It is found in the cell membrane. The protein resides in the membrane. The protein localises to the coated pit. Its function is as follows. Component of the adaptor complexes which link clathrin to receptors in coated vesicles. Clathrin-associated protein complexes are believed to interact with the cytoplasmic tails of membrane proteins, leading to their selection and concentration. AP50 is a subunit of the plasma membrane adaptor. The complex binds polyphosphoinositide-containing lipids. The chain is AP-2 complex subunit mu (ap2m1) from Xenopus tropicalis (Western clawed frog).